Here is a 264-residue protein sequence, read N- to C-terminus: Thymidylate synthase (264 aa).

Arginine 21 is a dUMP binding site. Residue histidine 51 participates in (6R)-5,10-methylene-5,6,7,8-tetrahydrofolate binding. DUMP is bound at residue 126-127 (RR). Residue cysteine 146 is the Nucleophile of the active site. DUMP contacts are provided by residues 166-169 (RSAD), asparagine 177, and 207-209 (HLY). Aspartate 169 contributes to the (6R)-5,10-methylene-5,6,7,8-tetrahydrofolate binding site. Alanine 263 contacts (6R)-5,10-methylene-5,6,7,8-tetrahydrofolate.

It belongs to the thymidylate synthase family. Bacterial-type ThyA subfamily. Homodimer.

The protein localises to the cytoplasm. The enzyme catalyses dUMP + (6R)-5,10-methylene-5,6,7,8-tetrahydrofolate = 7,8-dihydrofolate + dTMP. Its pathway is pyrimidine metabolism; dTTP biosynthesis. Its function is as follows. Catalyzes the reductive methylation of 2'-deoxyuridine-5'-monophosphate (dUMP) to 2'-deoxythymidine-5'-monophosphate (dTMP) while utilizing 5,10-methylenetetrahydrofolate (mTHF) as the methyl donor and reductant in the reaction, yielding dihydrofolate (DHF) as a by-product. This enzymatic reaction provides an intracellular de novo source of dTMP, an essential precursor for DNA biosynthesis. In Chromobacterium violaceum (strain ATCC 12472 / DSM 30191 / JCM 1249 / CCUG 213 / NBRC 12614 / NCIMB 9131 / NCTC 9757 / MK), this protein is Thymidylate synthase.